The sequence spans 513 residues: Coiled-coil domain-containing protein 102B (513 aa).

Residues 1-217 (MNLDSIHRLI…IDSLKLSEEM (217 aa)) are required for centriolar localization and for interaction with CEP250, CROCC, LRRC45 and NEK2. A phosphoserine mark is found at Ser-21, Ser-22, Ser-34, Ser-135, Ser-142, Ser-194, and Ser-210. The stretch at 72–142 (ELRLRELEEV…ELSTLKKKQS (71 aa)) forms a coiled coil. Coiled coils occupy residues 268 to 337 (QKIL…ESKS) and 363 to 513 (WDKR…LQNW). Phosphoserine is present on residues Ser-401, Ser-404, and Ser-406. Residues 493–513 (LDEEKERNENLETELRHLQNW) are disordered.

As to quaternary structure, interacts (via N-terminus) with centriolar protein CEP250/CNAP1; the interaction results in recruitment of CCDC102B to the proximal ends of centrioles. Interacts (via N-terminus) with CROCC/rootletin and LRRC45. Interacts (via N-terminus) with serine/threonine-protein kinase NEK2; the interaction results in phosphorylation of CCDC102B. Phosphorylated directly or indirectly by NEK2 during mitosis which causes dissociation of CCDC102B from the centrosome and allows for centrosome separation.

It localises to the cytoplasm. The protein localises to the cytoskeleton. Its subcellular location is the microtubule organizing center. It is found in the centrosome. The protein resides in the centriole. Its function is as follows. During interphase, forms fibers at the proximal ends of centrioles to maintain centrosome cohesion. During mitosis, dissociates from the centrosome following phosphorylation to allow centrosome separation. Contributes to CROCC/rootletin filament formation. This is Coiled-coil domain-containing protein 102B (CCDC102B) from Homo sapiens (Human).